The primary structure comprises 560 residues: DNA ligase B (560 aa).

Lys-124 serves as the catalytic N6-AMP-lysine intermediate.

Belongs to the NAD-dependent DNA ligase family. LigB subfamily.

It carries out the reaction NAD(+) + (deoxyribonucleotide)n-3'-hydroxyl + 5'-phospho-(deoxyribonucleotide)m = (deoxyribonucleotide)n+m + AMP + beta-nicotinamide D-nucleotide.. In terms of biological role, catalyzes the formation of phosphodiester linkages between 5'-phosphoryl and 3'-hydroxyl groups in double-stranded DNA using NAD as a coenzyme and as the energy source for the reaction. The polypeptide is DNA ligase B (Escherichia coli O6:K15:H31 (strain 536 / UPEC)).